The chain runs to 170 residues: Adenine phosphoribosyltransferase (170 aa).

This sequence belongs to the purine/pyrimidine phosphoribosyltransferase family. Homodimer.

It localises to the cytoplasm. The enzyme catalyses AMP + diphosphate = 5-phospho-alpha-D-ribose 1-diphosphate + adenine. It functions in the pathway purine metabolism; AMP biosynthesis via salvage pathway; AMP from adenine: step 1/1. Catalyzes a salvage reaction resulting in the formation of AMP, that is energically less costly than de novo synthesis. The protein is Adenine phosphoribosyltransferase of Fervidobacterium nodosum (strain ATCC 35602 / DSM 5306 / Rt17-B1).